A 420-amino-acid chain; its full sequence is Gamma-glutamyl phosphate reductase (420 aa).

Belongs to the gamma-glutamyl phosphate reductase family.

The protein resides in the cytoplasm. It catalyses the reaction L-glutamate 5-semialdehyde + phosphate + NADP(+) = L-glutamyl 5-phosphate + NADPH + H(+). It participates in amino-acid biosynthesis; L-proline biosynthesis; L-glutamate 5-semialdehyde from L-glutamate: step 2/2. Functionally, catalyzes the NADPH-dependent reduction of L-glutamate 5-phosphate into L-glutamate 5-semialdehyde and phosphate. The product spontaneously undergoes cyclization to form 1-pyrroline-5-carboxylate. The chain is Gamma-glutamyl phosphate reductase from Oenococcus oeni (strain ATCC BAA-331 / PSU-1).